Reading from the N-terminus, the 37-residue chain is Large ribosomal subunit protein bL36 (37 aa).

The protein belongs to the bacterial ribosomal protein bL36 family.

The polypeptide is Large ribosomal subunit protein bL36 (Methylibium petroleiphilum (strain ATCC BAA-1232 / LMG 22953 / PM1)).